Reading from the N-terminus, the 874-residue chain is Ribosome biogenesis protein ERB1 (874 aa).

Positions 1–148 are disordered; sequence MAKKEVSASK…DAFAAADAAT (148 aa). The segment covering 27–41 has biased composition (basic and acidic residues); the sequence is QAVEKEEAEKEKEEG. Residues 55–77 show a composition bias toward acidic residues; sequence PESDSDDEGAAAAEEEEEEEEQQ. Over residues 78–89 the composition is skewed to basic and acidic residues; it reads QDVKELDLDKGE. 2 stretches are compositionally biased toward acidic residues: residues 95-104 and 128-139; these read SDAEDFDSEE and PKEDGDEQDEQD. A required for interaction with NOP7 region spans residues 312–429; sequence RFVPSKHEAK…LRLVPGYQDS (118 aa). The segment at 429–465 is required for interaction with YTM1; sequence SVRERFERSLDLYLAPRLRKNKLNIDPESLIPELPSP. 2 WD repeats span residues 481-520 and 529-569; these read GHTGKIRTLSIDPQGLWLATGSDDGSVRIWEVLTGRQVFK and NGED…FEIE. Residues 593–602 show a composition bias toward basic and acidic residues; that stretch reads KVKGEDTKGD. The disordered stretch occupies residues 593–640; that stretch reads KVKGEDTKGDLDDDEEEEEEEEDDDDDEGQGKVKAHNSTAPAKKDVAK. Acidic residues predominate over residues 603–620; that stretch reads LDDDEEEEEEEEDDDDDE. WD repeat units follow at residues 658–700, 703–741, 744–783, 787–827, and 843–874; these read QCRR…SQSP, KSKGVIMDAKFHPFKPQLFVASQRQIKIYDLAQQTLLKK, PGVRLLSTIDLHPRGDNLLAASYDKRVLWHDLDLAATPYK, YHEK…DLMT, and INQIGVLDIVWHPKEAWLFSAGADGTARLWTT.

The protein belongs to the WD repeat BOP1/ERB1 family. As to quaternary structure, component of the NOP7 complex, composed of ERB1, NOP7 and YTM1. The complex is held together by ERB1, which interacts with NOP7 via its N-terminal domain and with YTM1 via a high-affinity interaction between the seven-bladed beta-propeller domains of the 2 proteins. The NOP7 complex associates with the 66S pre-ribosome.

Its subcellular location is the nucleus. It localises to the nucleolus. The protein localises to the nucleoplasm. Component of the NOP7 complex, which is required for maturation of the 25S and 5.8S ribosomal RNAs and formation of the 60S ribosome. This chain is Ribosome biogenesis protein ERB1, found in Lodderomyces elongisporus (strain ATCC 11503 / CBS 2605 / JCM 1781 / NBRC 1676 / NRRL YB-4239) (Yeast).